The following is a 188-amino-acid chain: Segregation and condensation protein B (188 aa).

It belongs to the ScpB family. As to quaternary structure, homodimer. Homodimerization may be required to stabilize the binding of ScpA to the Smc head domains. Component of a cohesin-like complex composed of ScpA, ScpB and the Smc homodimer, in which ScpA and ScpB bind to the head domain of Smc. The presence of the three proteins is required for the association of the complex with DNA.

The protein resides in the cytoplasm. Participates in chromosomal partition during cell division. May act via the formation of a condensin-like complex containing Smc and ScpA that pull DNA away from mid-cell into both cell halves. The sequence is that of Segregation and condensation protein B from Lactococcus lactis subsp. lactis (strain IL1403) (Streptococcus lactis).